A 295-amino-acid polypeptide reads, in one-letter code: MRARLPLNALRAFEASARYLNFTKAGLELHVSQAAVSQQVRTLEQMLGVALFTRVPRGLQLTDEGMHLLPSITEALQMMSSAMDKFHEGKIKEVLTIAVVGTFAIGWLLPRITAFLNENPWIDIRILTHNNVVNLAAEGIDASIRFGTGGWINTENILLFQAPHTVLCSPETSKKLYIPSDLKKVCLLRSYRKEEWNNWFKAAGIDPWTITGPIFDSTRLMIDAVKLGDYAALVPYHMFQKELNERSVAKPFEIYATLGGYWLTLQKSRVNHNSEALNVFKEWIIEHSREFVLKS.

The 58-residue stretch at 5–62 (LPLNALRAFEASARYLNFTKAGLELHVSQAAVSQQVRTLEQMLGVALFTRVPRGLQLT) folds into the HTH lysR-type domain. The segment at residues 22–41 (FTKAGLELHVSQAAVSQQVR) is a DNA-binding region (H-T-H motif).

The protein belongs to the LysR transcriptional regulatory family.

In terms of biological role, this protein is a positive regulator of gene expression of carbapenem-hydrolyzing beta-lactamase (NmcA). The chain is Carbapenem-hydrolyzing beta-lactamase transcriptional activator (nmcR) from Enterobacter cloacae.